Consider the following 293-residue polypeptide: MAITAAMVKELREKTGAGMLDCKKALVEADGDMNAAIDFLREKGIAKAAAKGDRIAAEGLTAVAVNGNKAALVEINSETDFVAKNERFQSLVQNIADAVLRNGSETAEAALASEYEAGKTIDTYISEEASTIGEKISLRRVALFTKEDNAAFGSYLHMGGRIGSVVVVEGTTDETVAKDIAMHIAAARPLYVDRSSVTEEEKAREEKVLTEQALNEGKPANIVEKMIAGRMNKFYEEICLVDQTFVKDPDFKVGKYVESKGGKIVSFVRFEVGEGMEKREENFAEEVMNQLKK.

The tract at residues 79-82 is involved in Mg(2+) ion dislocation from EF-Tu; that stretch reads TDFV.

This sequence belongs to the EF-Ts family.

It is found in the cytoplasm. Its function is as follows. Associates with the EF-Tu.GDP complex and induces the exchange of GDP to GTP. It remains bound to the aminoacyl-tRNA.EF-Tu.GTP complex up to the GTP hydrolysis stage on the ribosome. This chain is Elongation factor Ts, found in Exiguobacterium sibiricum (strain DSM 17290 / CCUG 55495 / CIP 109462 / JCM 13490 / 255-15).